Reading from the N-terminus, the 115-residue chain is Class I hydrophobin C (115 aa).

Residues 1–19 (MFSRVLVAALVALPVLVSA) form the signal peptide. 4 cysteine pairs are disulfide-bonded: Cys36–Cys93, Cys43–Cys87, Cys44–Cys74, and Cys94–Cys108.

This sequence belongs to the fungal hydrophobin family. Self-assembles to form functional amyloid fibrils called rodlets. Self-assembly into fibrillar rodlets occurs spontaneously at hydrophobic:hydrophilic interfaces and the rodlets further associate laterally to form amphipathic monolayers.

The protein resides in the secreted. The protein localises to the cell wall. Aerial growth, conidiation, and dispersal of filamentous fungi in the environment rely upon a capability of their secreting small amphipathic proteins called hydrophobins (HPBs) with low sequence identity. Class I can self-assemble into an outermost layer of rodlet bundles on aerial cell surfaces, conferring cellular hydrophobicity that supports fungal growth, development and dispersal; whereas Class II form highly ordered films at water-air interfaces through intermolecular interactions but contribute nothing to the rodlet structure. The chain is Class I hydrophobin C from Agaricus bisporus (White button mushroom).